A 283-amino-acid polypeptide reads, in one-letter code: Ribosomal RNA small subunit methyltransferase A (283 aa).

6 residues coordinate S-adenosyl-L-methionine: Asn-29, Leu-31, Gly-56, Glu-77, Asp-102, and Asn-123.

This sequence belongs to the class I-like SAM-binding methyltransferase superfamily. rRNA adenine N(6)-methyltransferase family. RsmA subfamily.

Its subcellular location is the cytoplasm. The enzyme catalyses adenosine(1518)/adenosine(1519) in 16S rRNA + 4 S-adenosyl-L-methionine = N(6)-dimethyladenosine(1518)/N(6)-dimethyladenosine(1519) in 16S rRNA + 4 S-adenosyl-L-homocysteine + 4 H(+). In terms of biological role, specifically dimethylates two adjacent adenosines (A1518 and A1519) in the loop of a conserved hairpin near the 3'-end of 16S rRNA in the 30S particle. May play a critical role in biogenesis of 30S subunits. This is Ribosomal RNA small subunit methyltransferase A from Acidobacterium capsulatum (strain ATCC 51196 / DSM 11244 / BCRC 80197 / JCM 7670 / NBRC 15755 / NCIMB 13165 / 161).